The chain runs to 944 residues: ATP-dependent RNA helicase DDX42 (944 aa).

The segment covering 1 to 18 (MNWNKGGPGTKRGFGFGG) has biased composition (gly residues). Disordered regions lie at residues 1-119 (MNWN…LEAF), 131-155 (MKRL…EEED), and 182-203 (EYDS…LPPI). A compositionally biased stretch (low complexity) spans 35-52 (SHSAFGTAGSSAAFAKSG). The span at 70 to 84 (DEENAYFEDEEEDNS) shows a compositional bias: acidic residues. A coiled-coil region spans residues 120–157 (MAEVEDQAARDMKRLEDKDKEKKNAKGIRDDIEEEDDQ). A compositionally biased stretch (basic and acidic residues) spans 131-149 (MKRLEDKDKEKKNAKGIRD). The short motif at 253 to 281 (SSFARFGFDEQLMHQIRKSEYTQPTPIQC) is the Q motif element. The 176-residue stretch at 284-459 (VPVAMSGRDM…RDILIDPIRV (176 aa)) folds into the Helicase ATP-binding domain. 297–304 (AKTGSGKT) serves as a coordination point for ATP. Residues 407 to 410 (DEAD) carry the DEAD box motif. The 146-residue stretch at 487–632 (WLTRRLVEFT…HVSKELLDLA (146 aa)) folds into the Helicase C-terminal domain. 3 disordered regions span residues 642 to 682 (RFKG…VMSN), 723 to 753 (GSSA…AANP), and 794 to 944 (SANA…RWDS). The span at 723–737 (GSSAAGASGWTSAGS) shows a compositional bias: low complexity. A compositionally biased stretch (polar residues) spans 738–752 (LNSVPTSSAQQNAAN). The segment covering 794–814 (SANASAGNREGVGSAGSAPRG) has biased composition (low complexity). Gly residues predominate over residues 815-824 (GSSGGGGGGI). Composition is skewed to basic and acidic residues over residues 825–887 (VRER…RHFT) and 901–926 (NISE…DNKT).

It belongs to the DEAD box helicase family. DDX42 subfamily. As to quaternary structure, transient component of the SF3B subcomplex of the 17S U2 SnRNP complex.

The protein resides in the cytoplasm. It is found in the nucleus. It carries out the reaction ATP + H2O = ADP + phosphate + H(+). In terms of biological role, ATP-dependent RNA helicase that binds to partially double-stranded RNAs (dsRNAs) in order to unwind RNA secondary structures. Unwinding is promoted in the presence of single-strand binding proteins. Also mediates RNA duplex formation thereby displacing the single-strand RNA binding protein. ATP and ADP modulate its activity: ATP binding and hydrolysis by DDX42 triggers RNA strand separation, whereas the ADP-bound form of the protein triggers annealing of complementary RNA strands. Required for assembly of the 17S U2 SnRNP complex of the spliceosome, a large ribonucleoprotein complex that removes introns from transcribed pre-mRNAs: DDX42 associates transiently with the SF3B subcomplex of the 17S U2 SnRNP complex and is released after fulfilling its role in the assembly of 17S U2 SnRNP. This Gallus gallus (Chicken) protein is ATP-dependent RNA helicase DDX42 (DDX42).